The chain runs to 82 residues: uncharacterized protein (82 aa).

The segment at 60-82 is disordered; that stretch reads YKRRRPDHMMKRNSPSYTGDHKT.

This is an uncharacterized protein from Saccharomyces cerevisiae (strain ATCC 204508 / S288c) (Baker's yeast).